The primary structure comprises 112 residues: ATP synthase epsilon chain (112 aa).

This sequence belongs to the ATPase epsilon chain family. F-type ATPases have 2 components, CF(1) - the catalytic core - and CF(0) - the membrane proton channel. CF(1) has five subunits: alpha(3), beta(3), gamma(1), delta(1), epsilon(1). CF(0) has three main subunits: a, b and c.

The protein localises to the cell inner membrane. Functionally, produces ATP from ADP in the presence of a proton gradient across the membrane. This chain is ATP synthase epsilon chain (atpC), found in Rickettsia conorii (strain ATCC VR-613 / Malish 7).